The chain runs to 301 residues: MLKSSKKEDSSKKNQNNNLIFTVRKLFSPIKNFFRTTKTPDNFFGVIKRLKINIQKMTLDERNILANLLELEDKTIEDIMVPRSDIVAIKLTANLAELSESIKLEVPHTRTLIYDGTLDNVVGFIHIKDLFKALATKQNGRLKKLIRKHIIAAPSMKLLDLLAKMRRERTHIAIVVDEYGGTDGLVTIEDLIEEIVGRIDDEHDQQLDSDNFKVINNSTIISNARVEVEVLEEIIGEKLKNDDDEFDTIGGLVLTRVSSVPVIGTRIDISENIEIEVTDATPRSLKQVKIRLKNGLHSDKI.

CBS domains are found at residues 80–142 (MVPR…NGRL) and 145–202 (LIRK…IDDE).

It belongs to the UPF0053 family. Hemolysin C subfamily.

This is Possible hemolysin C (tlyC) from Rickettsia akari (strain Hartford).